Reading from the N-terminus, the 161-residue chain is Capsid protein (161 aa).

Ala2 is subject to N-acetylalanine; by host.

The protein belongs to the virgaviridae capsid protein family.

It is found in the virion. In terms of biological role, capsid protein self-assembles to form rod-shaped virions about 18 nm in diameter with a central canal enclosing the viral genomic RNA. The protein is Capsid protein (CP) of Cucumber green mottle mosaic virus (strain watermelon SH) (CGMMV).